The primary structure comprises 105 residues: Ketoisovalerate oxidoreductase subunit VorD (105 aa).

2 4Fe-4S ferredoxin-type domains span residues 44–73 and 74–103; these read FMPV…IKED and GFVA…MVRE. [4Fe-4S] cluster contacts are provided by cysteine 53, cysteine 56, cysteine 59, cysteine 63, cysteine 83, cysteine 86, cysteine 89, and cysteine 93.

Heterotetramer of one alpha, one beta, one delta and one gamma chain. It depends on [4Fe-4S] cluster as a cofactor.

The catalysed reaction is 3-methyl-2-oxobutanoate + 2 oxidized [2Fe-2S]-[ferredoxin] + CoA = 2-methylpropanoyl-CoA + 2 reduced [2Fe-2S]-[ferredoxin] + CO2 + H(+). The chain is Ketoisovalerate oxidoreductase subunit VorD (vorD) from Pyrococcus abyssi (strain GE5 / Orsay).